A 283-amino-acid polypeptide reads, in one-letter code: Protein/nucleic acid deglycase HchA (283 aa).

Positions 86, 91, and 123 each coordinate Zn(2+). Residue Cys-185 is the Nucleophile of the active site.

This sequence belongs to the peptidase C56 family. HchA subfamily. In terms of assembly, homodimer.

The protein resides in the cytoplasm. It carries out the reaction N(omega)-(1-hydroxy-2-oxopropyl)-L-arginyl-[protein] + H2O = lactate + L-arginyl-[protein] + H(+). The catalysed reaction is N(6)-(1-hydroxy-2-oxopropyl)-L-lysyl-[protein] + H2O = lactate + L-lysyl-[protein] + H(+). The enzyme catalyses S-(1-hydroxy-2-oxopropyl)-L-cysteinyl-[protein] + H2O = lactate + L-cysteinyl-[protein] + H(+). It catalyses the reaction N(omega)-(1-hydroxy-2-oxoethyl)-L-arginyl-[protein] + H2O = L-arginyl-[protein] + glycolate + H(+). It carries out the reaction N(6)-(1-hydroxy-2-oxoethyl)-L-lysyl-[protein] + H2O = glycolate + L-lysyl-[protein] + H(+). The catalysed reaction is S-(1-hydroxy-2-oxoethyl)-L-cysteinyl-[protein] + H2O = glycolate + L-cysteinyl-[protein] + H(+). The enzyme catalyses N(2)-(1-hydroxy-2-oxopropyl)-dGTP + H2O = lactate + dGTP + H(+). It catalyses the reaction N(2)-(1-hydroxy-2-oxopropyl)-GTP + H2O = lactate + GTP + H(+). It carries out the reaction N(2)-(1-hydroxy-2-oxopropyl)-GDP + H2O = lactate + GDP + H(+). The catalysed reaction is N(2)-(1-hydroxy-2-oxopropyl)-GMP + H2O = lactate + GMP + H(+). The enzyme catalyses N(2)-(1-hydroxy-2-oxoethyl)-dGTP + H2O = dGTP + glycolate + H(+). It catalyses the reaction N(2)-(1-hydroxy-2-oxoethyl)-GTP + H2O = glycolate + GTP + H(+). It carries out the reaction N(2)-(1-hydroxy-2-oxoethyl)-GDP + H2O = glycolate + GDP + H(+). The catalysed reaction is N(2)-(1-hydroxy-2-oxoethyl)-GMP + H2O = glycolate + GMP + H(+). The enzyme catalyses an N(2)-(1-hydroxy-2-oxopropyl)-guanosine in RNA + H2O = a guanosine in RNA + lactate + H(+). It catalyses the reaction an N(2)-(1-hydroxy-2-oxopropyl)-2'-deoxyguanosine in DNA + H2O = a 2'-deoxyguanosine in DNA + lactate + H(+). It carries out the reaction an N(2)-(1-hydroxy-2-oxoethyl)-guanosine in RNA + H2O = a guanosine in RNA + glycolate + H(+). The catalysed reaction is an N(2)-(1-hydroxy-2-oxoethyl)-2'-deoxyguanosine in DNA + H2O = a 2'-deoxyguanosine in DNA + glycolate + H(+). In terms of biological role, protein and nucleotide deglycase that catalyzes the deglycation of the Maillard adducts formed between amino groups of proteins or nucleotides and reactive carbonyl groups of glyoxals. Thus, functions as a protein deglycase that repairs methylglyoxal- and glyoxal-glycated proteins, and releases repaired proteins and lactate or glycolate, respectively. Deglycates cysteine, arginine and lysine residues in proteins, and thus reactivates these proteins by reversing glycation by glyoxals. Acts on early glycation intermediates (hemithioacetals and aminocarbinols), preventing the formation of Schiff bases and advanced glycation endproducts (AGE). Also functions as a nucleotide deglycase able to repair glycated guanine in the free nucleotide pool (GTP, GDP, GMP, dGTP) and in DNA and RNA. Is thus involved in a major nucleotide repair system named guanine glycation repair (GG repair), dedicated to reversing methylglyoxal and glyoxal damage via nucleotide sanitization and direct nucleic acid repair. Plays an important role in protecting cells from carbonyl stress. The chain is Protein/nucleic acid deglycase HchA from Escherichia coli O7:K1 (strain IAI39 / ExPEC).